Reading from the N-terminus, the 79-residue chain is MMKYFLVLCLVVLGVAAVQAAALEDEKFLNLAESLAMPEESRCKARRYGCTDKAECCSEKCAYPALTCAFNWSCEKVCA.

A signal peptide spans 1-20; it reads MMKYFLVLCLVVLGVAAVQA. Disulfide bonds link Cys43-Cys57, Cys50-Cys61, Cys56-Cys78, and Cys68-Cys74. N-linked (GlcNAc...) asparagine glycosylation is present at Asn71.

The protein belongs to the neurotoxin 13 (insecticidal toxin ABC) family. ICK-21 subfamily. As to expression, expressed by the venom gland.

The protein resides in the secreted. In terms of biological role, ion channel inhibitor. In Trittame loki (Brush-footed trapdoor spider), this protein is Toxin ICK-20.